The primary structure comprises 670 residues: Beta-fructofuranosidase 1 (670 aa).

The tract at residues 1–40 is disordered; it reads MIPAVADPTTLDGGGARRPLLPETDPRGRAAAGAEQKRPP. Topologically, residues 1-44 are cytoplasmic; that stretch reads MIPAVADPTTLDGGGARRPLLPETDPRGRAAAGAEQKRPPATPT. The propeptide at 1–112 is removed in mature form; the sequence is MIPAVADPTT…APLLGSGALQ (112 aa). The chain crosses the membrane as a helical; Signal-anchor for type II membrane protein span at residues 45-65; sequence VLTAVVSAVLLLVLVAVTVLA. Residues 66 to 670 lie on the Lumenal side of the membrane; the sequence is SQHVDGQAGG…RPYPATTTSL (605 aa). Substrate is bound by residues 136-139, Q155, and W163; that span reads WMND. Residue D139 is part of the active site. Residue N165 is glycosylated (N-linked (GlcNAc...) asparagine). Substrate is bound by residues 198–199 and 263–264; these read WS and RD. N-linked (GlcNAc...) asparagine glycosylation is present at N275. 2 residues coordinate substrate: E322 and D362. The N-linked (GlcNAc...) asparagine glycan is linked to N518. C519 and C567 are joined by a disulfide. Residues N595 and N639 are each glycosylated (N-linked (GlcNAc...) asparagine).

The protein belongs to the glycosyl hydrolase 32 family. As to quaternary structure, may be present in two forms, a 70 kDa monomer and a heterodimer of the 30 kDa and 38 kDa subunits. The ratio of the levels of the two forms within cells appears to be regulated developmentally.

Its subcellular location is the membrane. It localises to the vacuole lumen. It carries out the reaction Hydrolysis of terminal non-reducing beta-D-fructofuranoside residues in beta-D-fructofuranosides.. It functions in the pathway glycan biosynthesis; sucrose metabolism. This is Beta-fructofuranosidase 1 (IVR1) from Zea mays (Maize).